A 164-amino-acid chain; its full sequence is Protein-export protein SecB (164 aa).

This sequence belongs to the SecB family. In terms of assembly, homotetramer, a dimer of dimers. One homotetramer interacts with 1 SecA dimer.

The protein localises to the cytoplasm. In terms of biological role, one of the proteins required for the normal export of preproteins out of the cell cytoplasm. It is a molecular chaperone that binds to a subset of precursor proteins, maintaining them in a translocation-competent state. It also specifically binds to its receptor SecA. The chain is Protein-export protein SecB from Pseudomonas syringae pv. tomato (strain ATCC BAA-871 / DC3000).